A 138-amino-acid chain; its full sequence is MAKPIPKVGSRRNGRSSARKSARRIPKGVIHVQASFNNTIVTVTDVRGRVISWSSAGTCGFKGTRRGTPFAAQTAAGNAIRAVVDQGMQRAEVMIKGPGLGRDAALRAIRRSGILLSFVRDVTPMPHNGCRPPKKRRV.

The segment at 1–24 (MAKPIPKVGSRRNGRSSARKSARR) is disordered. Residues 9-24 (GSRRNGRSSARKSARR) are compositionally biased toward basic residues.

The protein belongs to the universal ribosomal protein uS11 family. Part of the 30S ribosomal subunit.

The protein localises to the plastid. It localises to the chloroplast. The chain is Small ribosomal subunit protein uS11c from Gossypium hirsutum (Upland cotton).